We begin with the raw amino-acid sequence, 595 residues long: uncharacterized protein (595 aa).

The segment at 112–180 (VRPPGYDPES…KDVFGRALPT (69 aa)) is disordered. 2 stretches are compositionally biased toward basic and acidic residues: residues 120 to 133 (ESAK…EKHK) and 161 to 174 (RTQE…KDVF). The segment at 211 to 228 (VKCLRCGNFGHQSGDRDC) adopts a CCHC-type; degenerate zinc-finger fold. Disordered stretches follow at residues 254-290 (HTDP…IVAE) and 310-595 (KSMS…RRRN). Over residues 256 to 267 (DPSEPLKWELKQ) the composition is skewed to basic and acidic residues. 2 stretches are compositionally biased toward basic residues: residues 316–331 (KKRK…KHSS) and 351–364 (RGSK…KKSK). 3 stretches are compositionally biased toward basic and acidic residues: residues 414–428 (HYYD…EIVD), 470–539 (VSEK…HVYE), and 547–565 (FSDR…ESNR). Positions 584-595 (RKHRYSTNRRRN) are enriched in basic residues.

This is an uncharacterized protein from Arabidopsis thaliana (Mouse-ear cress).